A 316-amino-acid chain; its full sequence is HPr kinase/phosphorylase (316 aa).

Catalysis depends on residues histidine 143 and lysine 164. 158 to 165 (GEAGSGKS) contacts ATP. A Mg(2+)-binding site is contributed by serine 165. The active-site Proton acceptor; for phosphorylation activity. Proton donor; for dephosphorylation activity is aspartate 182. The important for the catalytic mechanism of both phosphorylation and dephosphorylation stretch occupies residues 206–215 (LEVRGLGVLN). Glutamate 207 provides a ligand contact to Mg(2+). The active site involves arginine 251. The important for the catalytic mechanism of dephosphorylation stretch occupies residues 272–277 (PVMPGR).

The protein belongs to the HPrK/P family. Homohexamer. It depends on Mg(2+) as a cofactor.

The enzyme catalyses [HPr protein]-L-serine + ATP = [HPr protein]-O-phospho-L-serine + ADP + H(+). It carries out the reaction [HPr protein]-O-phospho-L-serine + phosphate + H(+) = [HPr protein]-L-serine + diphosphate. Catalyzes the ATP- as well as the pyrophosphate-dependent phosphorylation of a specific serine residue in HPr, a phosphocarrier protein of the phosphoenolpyruvate-dependent sugar phosphotransferase system (PTS). HprK/P also catalyzes the pyrophosphate-producing, inorganic phosphate-dependent dephosphorylation (phosphorolysis) of seryl-phosphorylated HPr (P-Ser-HPr). The sequence is that of HPr kinase/phosphorylase from Xanthomonas axonopodis pv. citri (strain 306).